Here is a 292-residue protein sequence, read N- to C-terminus: Shikimate dehydrogenase (NADP(+)) (292 aa).

Residues 22–24 (SLS) and Ser-69 contribute to the shikimate site. Residue Lys-73 is the Proton acceptor of the active site. Positions 94 and 111 each coordinate shikimate. Residues 135-139 (GVGGA) and Ile-236 contribute to the NADP(+) site. Tyr-238 contributes to the shikimate binding site. NADP(+) is bound at residue Gly-260.

It belongs to the shikimate dehydrogenase family. Homodimer.

The enzyme catalyses shikimate + NADP(+) = 3-dehydroshikimate + NADPH + H(+). Its pathway is metabolic intermediate biosynthesis; chorismate biosynthesis; chorismate from D-erythrose 4-phosphate and phosphoenolpyruvate: step 4/7. Its function is as follows. Involved in the biosynthesis of the chorismate, which leads to the biosynthesis of aromatic amino acids. Catalyzes the reversible NADPH linked reduction of 3-dehydroshikimate (DHSA) to yield shikimate (SA). This Streptococcus pyogenes serotype M28 (strain MGAS6180) protein is Shikimate dehydrogenase (NADP(+)).